A 715-amino-acid polypeptide reads, in one-letter code: Nucleolar complex protein 2 homolog (715 aa).

Disordered stretches follow at residues 17–71 (SKRI…HKLD), 85–132 (FLQQ…DKTK), and 638–715 (ERSA…SDED). Over residues 89 to 128 (EDADLLNMEDDGDDDEDDDEDDEDEEEEESDDDEDDEEDD) the composition is skewed to acidic residues. Residues 638–660 (ERSAVENSKKDDKKKKKEEEAAA) show a composition bias toward basic and acidic residues.

The protein belongs to the NOC2 family.

Its subcellular location is the nucleus. In terms of biological role, required for normal somatic gonad development and for regulation of germline development and proliferation. This chain is Nucleolar complex protein 2 homolog (pro-2), found in Caenorhabditis elegans.